The primary structure comprises 99 residues: U1-theraphotoxin-Lsp1c (99 aa).

An N-terminal signal peptide occupies residues 1–23 (MRKITIRALLLCSLLLVFHTSAA). The propeptide occupies 24–50 (AELQAQEGHLMIPGDTDTALETVDDER). 4 disulfide bridges follow: cysteine 54–cysteine 67, cysteine 58–cysteine 91, cysteine 72–cysteine 74, and cysteine 85–cysteine 96.

It belongs to the neurotoxin 12 (Hwtx-2) family. 04 (lasiotoxin) subfamily. In terms of tissue distribution, expressed by the venom gland.

It is found in the secreted. Functionally, toxin that causes irreversible contractile paralysis into adult Aedes aegypti resulting in 100% mortality after 24 hours. This is U1-theraphotoxin-Lsp1c from Lasiodora sp. (strain IBSP 8539) (Brazilian salmon pink birdeater).